The primary structure comprises 213 residues: Transmembrane emp24 domain-containing protein p24delta8 (213 aa).

The signal sequence occupies residues 1–22 (MDLCRSSILLLIIALLSPRTLS). The Lumenal portion of the chain corresponds to 23–180 (MRYELKSSKT…QELNRSTNSK (158 aa)). One can recognise a GOLD domain in the interval 32 to 148 (TKCIGEEIHE…VDMMEYQVKT (117 aa)). Asparagine 97 is a glycosylation site (N-linked (GlcNAc...) asparagine). Positions 163 to 176 (LREREEEMQELNRS) form a coiled coil. Arginine 166 is subject to Omega-N-methylated arginine. An N-linked (GlcNAc...) asparagine glycan is attached at asparagine 174. The helical transmembrane segment at 181-203 (MAWLSFGSLVVCLSVAGLQFWHL) threads the bilayer. Positions 202–213 (HLKTFFEKKKLI) are interaction with ARF1. The Cytoplasmic segment spans residues 204-213 (KTFFEKKKLI). Residues 206-207 (FF) carry the COPII vesicle coat-binding motif. Positions 206-213 (FFEKKKLI) match the COPI vesicle coat-binding motif.

It belongs to the EMP24/GP25L family. In terms of assembly, probably oligomerizes with other members of the EMP24/GP25L family. Associates with the COPI vesicle coat (coatomer). Associates with the COPII vesicle coat (coatomer). Interacts with ARF1 (GDP-bound).

It is found in the endoplasmic reticulum membrane. The protein resides in the golgi apparatus. Its subcellular location is the cis-Golgi network membrane. The protein localises to the golgi stack membrane. In terms of biological role, involved in vesicular protein trafficking. Mainly functions in the early secretory pathway. Thought to act as cargo receptor at the lumenal side for incorporation of secretory cargo molecules into transport vesicles and to be involved in vesicle coat formation at the cytoplasmic side. On Golgi membranes, acts as a primary receptor for ARF1-GDP which is involved in COPI-vesicle formation. The sequence is that of Transmembrane emp24 domain-containing protein p24delta8 from Arabidopsis thaliana (Mouse-ear cress).